The sequence spans 407 residues: Multifunctional CCA protein (407 aa).

Positions 8 and 11 each coordinate ATP. CTP is bound by residues Gly8 and Arg11. Mg(2+)-binding residues include Asp21 and Asp23. Residues Arg91, Arg137, and Arg140 each contribute to the ATP site. Positions 91, 137, and 140 each coordinate CTP. The HD domain maps to 228-329; sequence SGIHTLMVAQ…IKIFDKMDVW (102 aa).

The protein belongs to the tRNA nucleotidyltransferase/poly(A) polymerase family. Bacterial CCA-adding enzyme type 1 subfamily. Monomer. Can also form homodimers and oligomers. Mg(2+) serves as cofactor. It depends on Ni(2+) as a cofactor.

The catalysed reaction is a tRNA precursor + 2 CTP + ATP = a tRNA with a 3' CCA end + 3 diphosphate. It carries out the reaction a tRNA with a 3' CCA end + 2 CTP + ATP = a tRNA with a 3' CCACCA end + 3 diphosphate. Its function is as follows. Catalyzes the addition and repair of the essential 3'-terminal CCA sequence in tRNAs without using a nucleic acid template. Adds these three nucleotides in the order of C, C, and A to the tRNA nucleotide-73, using CTP and ATP as substrates and producing inorganic pyrophosphate. tRNA 3'-terminal CCA addition is required both for tRNA processing and repair. Also involved in tRNA surveillance by mediating tandem CCA addition to generate a CCACCA at the 3' terminus of unstable tRNAs. While stable tRNAs receive only 3'-terminal CCA, unstable tRNAs are marked with CCACCA and rapidly degraded. The sequence is that of Multifunctional CCA protein from Aliivibrio fischeri (strain MJ11) (Vibrio fischeri).